Here is a 222-residue protein sequence, read N- to C-terminus: 7-cyano-7-deazaguanine synthase (222 aa).

14–24 (FSGGQDSTTCL) serves as a coordination point for ATP. Residues Cys-190, Cys-199, Cys-202, and Cys-205 each coordinate Zn(2+).

This sequence belongs to the QueC family. As to quaternary structure, homodimer. Zn(2+) is required as a cofactor.

The catalysed reaction is 7-carboxy-7-deazaguanine + NH4(+) + ATP = 7-cyano-7-deazaguanine + ADP + phosphate + H2O + H(+). It functions in the pathway purine metabolism; 7-cyano-7-deazaguanine biosynthesis. Catalyzes the ATP-dependent conversion of 7-carboxy-7-deazaguanine (CDG) to 7-cyano-7-deazaguanine (preQ(0)). In Staphylococcus aureus (strain bovine RF122 / ET3-1), this protein is 7-cyano-7-deazaguanine synthase.